The sequence spans 581 residues: Arginine--tRNA ligase (581 aa).

A 'HIGH' region motif is present at residues 126-136; it reads PNLAKEMHVGH.

It belongs to the class-I aminoacyl-tRNA synthetase family. In terms of assembly, monomer.

The protein resides in the cytoplasm. It carries out the reaction tRNA(Arg) + L-arginine + ATP = L-arginyl-tRNA(Arg) + AMP + diphosphate. The sequence is that of Arginine--tRNA ligase from Shewanella sp. (strain ANA-3).